A 1487-amino-acid chain; its full sequence is Major viral transcription factor (1487 aa).

3 disordered regions span residues 41–295, 310–370, and 803–1007; these read AAPD…LPPG, LAKT…AEEA, and PPTR…HTPR. A compositionally biased stretch (pro residues) spans 66–75; the sequence is VIPPPSPTPE. 2 stretches are compositionally biased toward low complexity: residues 165–193 and 201–213; these read PSSA…SSSS and DGAG…SSSS. Positions 214 to 224 are enriched in acidic residues; the sequence is DDSDSDEGGEE. The span at 235-272 shows a compositional bias: low complexity; sequence AAKTPSAAGSPGPSSGGDRPAAGAATPKSCRSGAASPG. The span at 273–285 shows a compositional bias: pro residues; the sequence is APAPAPASAPAPS. 3 stretches are compositionally biased toward low complexity: residues 807–829, 849–860, and 867–877; these read SQQP…AEGS, PSSHSQSPQHSQ, and ATTATCCRATQ. A compositionally biased stretch (polar residues) spans 878–893; the sequence is TNARSRGQQHQPQKAR. Positions 920–929 are enriched in basic residues; it reads HGRPRGKSGK. The span at 938–951 shows a compositional bias: low complexity; it reads AAQAGASASFSSSA. Residues 988-1007 are compositionally biased toward basic and acidic residues; sequence GPDRRGGFRRVPRGDCHTPR.

Belongs to the herpesviridae ICP4 family. A long stretch of serine residues may be a major site of phosphorylation.

The protein resides in the host nucleus. Functionally, this IE protein is a multifunctional protein capable of migrating to the nucleus, binding to DNA, trans-activating other viral genes, and autoregulating its own synthesis. In Equine herpesvirus 1 (strain Ab4p) (EHV-1), this protein is Major viral transcription factor (IE).